A 145-amino-acid polypeptide reads, in one-letter code: 6-pyruvoyl tetrahydrobiopterin synthase (145 aa).

Serine 19 carries the phosphoserine; by PKG modification. Residue histidine 24 coordinates Zn(2+). Serine 28 bears the Phosphoserine mark. The active-site Proton acceptor is the cysteine 43. Residues histidine 49 and histidine 51 each contribute to the Zn(2+) site. The Charge relay system role is filled by histidine 90. Tyrosine 128 carries the phosphotyrosine modification. Glutamate 134 (charge relay system) is an active-site residue.

It belongs to the PTPS family. As to quaternary structure, homohexamer formed of two homotrimers in a head to head fashion. It depends on Zn(2+) as a cofactor. Phosphorylation of Ser-19 is required for maximal enzyme activity.

It carries out the reaction 7,8-dihydroneopterin 3'-triphosphate = 6-pyruvoyl-5,6,7,8-tetrahydropterin + triphosphate + H(+). Its pathway is cofactor biosynthesis; tetrahydrobiopterin biosynthesis; tetrahydrobiopterin from 7,8-dihydroneopterin triphosphate: step 1/3. In terms of biological role, involved in the biosynthesis of tetrahydrobiopterin, an essential cofactor of aromatic amino acid hydroxylases. Catalyzes the transformation of 7,8-dihydroneopterin triphosphate into 6-pyruvoyl tetrahydropterin. The polypeptide is 6-pyruvoyl tetrahydrobiopterin synthase (PTS) (Homo sapiens (Human)).